A 1178-amino-acid chain; its full sequence is Niemann-Pick type C1-related protein (1178 aa).

N-linked (GlcNAc...) asparagine glycosylation occurs at Asn41. A run of 2 helical transmembrane segments spans residues 157–177 and 412–432; these read PWLFIMVSLLATAGMSVGIFL and VVEWLRLCAAVLVVFLYTSVV. In terms of domain architecture, SSD spans 414-570; that stretch reads EWLRLCAAVL…LTFFLAGLSL (157 aa). N-linked (GlcNAc...) asparagine glycosylation occurs at Asn433. 4 helical membrane passes run 448-468, 478-498, 516-536, and 545-565; these read GALASLLGYLGGAGLVYLCGV, PFLAIGIGVDDLFVIINAYSL, AGLSITITTLTNVITFIIGAL, and FCIITAGALTWGYVLCLTFFL. The N-linked (GlcNAc...) asparagine glycan is linked to Asn621. Residues 789–809 form a helical membrane-spanning segment; that stretch reads ATVLVIFAAVTALAIYGATTL. N-linked (GlcNAc...) asparagine glycosylation is found at Asn917 and Asn943. 5 consecutive transmembrane segments (helical) span residues 986 to 1006, 1013 to 1033, 1037 to 1057, 1080 to 1100, and 1114 to 1134; these read FTLTNLSIALVCILAISLLLI, IIVVLVVSLVDLWLFGFMALI, LSMISMVNLLISIGYSVDFTI, IVMGAPVTHGMLSTLLSILAL, and MMFMVIVFAYTAGMVLLPVVL.

This sequence belongs to the patched family.

It is found in the inner membrane complex. It carries out the reaction cholesterol(in) = cholesterol(out). Functionally, likely facilitates the efflux of cholesterol and gangliosides from membranes. Plays a role in the regulation of lipid homeostasis. The protein is Niemann-Pick type C1-related protein of Toxoplasma gondii (strain ATCC 50611 / Me49).